Reading from the N-terminus, the 427-residue chain is Glutamate-1-semialdehyde 2,1-aminomutase (427 aa).

Lysine 265 bears the N6-(pyridoxal phosphate)lysine mark.

The protein belongs to the class-III pyridoxal-phosphate-dependent aminotransferase family. HemL subfamily. Homodimer. The cofactor is pyridoxal 5'-phosphate.

The protein resides in the cytoplasm. It carries out the reaction (S)-4-amino-5-oxopentanoate = 5-aminolevulinate. It functions in the pathway porphyrin-containing compound metabolism; protoporphyrin-IX biosynthesis; 5-aminolevulinate from L-glutamyl-tRNA(Glu): step 2/2. In Pseudomonas syringae pv. tomato (strain ATCC BAA-871 / DC3000), this protein is Glutamate-1-semialdehyde 2,1-aminomutase.